The primary structure comprises 105 residues: Zinc metalloproteinase/disintegrin (105 aa).

The Peptidase M12B domain maps to 1–3 (DEP). The region spanning 11–96 (PPVCGNYFVE…AECTDRFQRN (86 aa)) is the Disintegrin domain. Cystine bridges form between C25/C43, C27/C38, C37/C60, C51/C57, C56/C82, and C69/C89. The D/ECD-tripeptide motif lies at 75–77 (ECD). Residues 99–105 (PCQNNNG) constitute a propeptide that is removed on maturation.

Belongs to the venom metalloproteinase (M12B) family. P-III subfamily. In terms of assembly, monomer. Requires Zn(2+) as cofactor. In terms of tissue distribution, expressed by the venom gland.

The protein resides in the secreted. Impairs hemostasis in the envenomed animal. Its function is as follows. Inhibits platelet aggregation induced by ADP, thrombin, platelet-activating factor and collagen. Acts by inhibiting fibrinogen interaction with platelet receptors GPIIb/GPIIIa (ITGA2B/ITGB3). The sequence is that of Zinc metalloproteinase/disintegrin from Gloydius brevicauda (Korean slamosa snake).